A 968-amino-acid polypeptide reads, in one-letter code: RNA polymerase-associated protein RapA (968 aa).

The 170-residue stretch at 163 to 332 folds into the Helicase ATP-binding domain; it reads EVGQRFAPRV…FARLRLLDPD (170 aa). 176–183 contributes to the ATP binding site; it reads DEVGLGKT. Positions 278–281 match the DEAH box motif; the sequence is DEAH. In terms of domain architecture, Helicase C-terminal spans 491-678; it reads RVDWLIDFLK…GTKARYQELK (188 aa).

It belongs to the SNF2/RAD54 helicase family. RapA subfamily. Interacts with the RNAP. Has a higher affinity for the core RNAP than for the holoenzyme. Its ATPase activity is stimulated by binding to RNAP.

Its function is as follows. Transcription regulator that activates transcription by stimulating RNA polymerase (RNAP) recycling in case of stress conditions such as supercoiled DNA or high salt concentrations. Probably acts by releasing the RNAP, when it is trapped or immobilized on tightly supercoiled DNA. Does not activate transcription on linear DNA. Probably not involved in DNA repair. This is RNA polymerase-associated protein RapA from Shewanella pealeana (strain ATCC 700345 / ANG-SQ1).